Here is a 596-residue protein sequence, read N- to C-terminus: Membrane protein insertase YidC (596 aa).

Transmembrane regions (helical) follow at residues 4–24 (NKLI…HFFD), 332–352 (LGWP…FSFI), 359–379 (YGLV…PLSY), 425–445 (LSGC…FNFF), 468–488 (IINL…FTLL), and 518–538 (PITF…YYFV). The segment covering 565 to 584 (KNKEKSANNKEGSFKKRFQD) has biased composition (basic and acidic residues). Residues 565-596 (KNKEKSANNKEGSFKKRFQDAIKASASHKGKK) form a disordered region.

Belongs to the OXA1/ALB3/YidC family. Type 1 subfamily. In terms of assembly, interacts with the Sec translocase complex via SecD. Specifically interacts with transmembrane segments of nascent integral membrane proteins during membrane integration.

Its subcellular location is the cell inner membrane. Functionally, required for the insertion and/or proper folding and/or complex formation of integral membrane proteins into the membrane. Involved in integration of membrane proteins that insert both dependently and independently of the Sec translocase complex, as well as at least some lipoproteins. Aids folding of multispanning membrane proteins. In Amoebophilus asiaticus (strain 5a2), this protein is Membrane protein insertase YidC.